Consider the following 90-residue polypeptide: MNIYTFDFDEIESQEDFYRDFSQTFGLAKDKVRDLDSLWDVLMNDVLPLPLEIEFVHLGEKTRRRFGALILLFDEAEEELEGHLRFNVRH.

Belongs to the barstar family.

This is an uncharacterized protein from Escherichia coli O157:H7.